Consider the following 442-residue polypeptide: GTPase Der (442 aa).

EngA-type G domains lie at 3–167 (PTIV…PPDV) and 177–350 (PRIA…AAAM). Residues 9-16 (GRPNVGKS), 56-60 (DTAGF), 119-122 (NKSE), 183-190 (GRPNVGKS), 230-234 (DTAGL), and 295-298 (NKWD) each bind GTP. The KH-like domain occupies 351-435 (VNLSTPRLTR…PLRIQFRTAH (85 aa)).

The protein belongs to the TRAFAC class TrmE-Era-EngA-EngB-Septin-like GTPase superfamily. EngA (Der) GTPase family. In terms of assembly, associates with the 50S ribosomal subunit.

In terms of biological role, GTPase that plays an essential role in the late steps of ribosome biogenesis. The chain is GTPase Der from Aromatoleum aromaticum (strain DSM 19018 / LMG 30748 / EbN1) (Azoarcus sp. (strain EbN1)).